We begin with the raw amino-acid sequence, 1572 residues long: Multiple epidermal growth factor-like domains protein 6 (1572 aa).

An N-terminal signal peptide occupies residues 1-26; sequence MPVGVEARASWRVVALTLLLLPAVPA. Residues 40-121 enclose the EMI domain; that stretch reads MPHVCAEQKL…QKPGQEGCLS (82 aa). 36 disulfides stabilise this stretch: cysteine 44-cysteine 107, cysteine 73-cysteine 79, cysteine 106-cysteine 119, cysteine 126-cysteine 137, cysteine 133-cysteine 146, cysteine 148-cysteine 161, cysteine 167-cysteine 178, cysteine 174-cysteine 187, cysteine 189-cysteine 202, cysteine 291-cysteine 302, cysteine 298-cysteine 311, cysteine 313-cysteine 326, cysteine 418-cysteine 429, cysteine 425-cysteine 438, cysteine 440-cysteine 453, cysteine 522-cysteine 535, cysteine 529-cysteine 542, cysteine 544-cysteine 553, cysteine 566-cysteine 578, cysteine 572-cysteine 585, cysteine 587-cysteine 596, cysteine 609-cysteine 621, cysteine 615-cysteine 628, cysteine 630-cysteine 639, cysteine 788-cysteine 797, cysteine 791-cysteine 804, cysteine 806-cysteine 815, cysteine 832-cysteine 840, cysteine 834-cysteine 847, cysteine 849-cysteine 858, cysteine 871-cysteine 884, cysteine 875-cysteine 891, cysteine 893-cysteine 902, cysteine 915-cysteine 927, cysteine 921-cysteine 934, and cysteine 936-cysteine 945. In terms of domain architecture, EGF-like 1; calcium-binding spans 122–162; it reads DVDECANANGGCEGPCCNTVGGFYCRCPPGYQLQGDGKTCQ. Residues 163–203 form the EGF-like 2; calcium-binding domain; the sequence is DVDECRSHNGGCQHRCVNTPGSYLCECKPGFRLHTDGRTCL. The EGF-like 3; calcium-binding domain occupies 287–327; the sequence is DVDECALGLAQCAHGCLNTQGSFKCVCHAGYELGADGRQCY. One can recognise an EGF-like 4; calcium-binding domain in the interval 414–454; the sequence is DVDECASGHSGCEHHCSNLAGSFQCFCEAGYRLDEDRRGCT. 17 EGF-like domains span residues 518–554, 562–597, 605–640, 785–816, 829–859, 867–903, 911–946, 997–1032, 1040–1075, 1083–1118, 1131–1161, 1169–1204, 1256–1291, 1299–1334, 1342–1377, 1390–1420, and 1428–1463; these read FGHD…IICN, FGKN…AHCE, YGKH…RFCH, QEIC…SRCQ, QMRC…LSCQ, WGPD…PQCE, FGPG…SFCE, FGLN…PTCL, YGKN…LACE, HGAG…DKCQ, EEHC…SHCE, FGEA…PGCE, YGPG…ADCS, FGPS…GHCE, FGKG…PHCE, LLEC…QACE, and HGSG…QFCE. The N-linked (GlcNAc...) asparagine glycan is linked to asparagine 1000. Cystine bridges form between cysteine 1001/cysteine 1013, cysteine 1007/cysteine 1020, cysteine 1022/cysteine 1031, cysteine 1044/cysteine 1056, cysteine 1050/cysteine 1063, cysteine 1065/cysteine 1074, cysteine 1087/cysteine 1099, cysteine 1093/cysteine 1106, cysteine 1108/cysteine 1117, cysteine 1134/cysteine 1142, cysteine 1136/cysteine 1149, cysteine 1151/cysteine 1160, cysteine 1173/cysteine 1185, cysteine 1177/cysteine 1192, cysteine 1194/cysteine 1203, cysteine 1260/cysteine 1272, cysteine 1266/cysteine 1279, cysteine 1281/cysteine 1290, cysteine 1303/cysteine 1315, cysteine 1309/cysteine 1322, cysteine 1324/cysteine 1333, cysteine 1346/cysteine 1358, cysteine 1352/cysteine 1365, cysteine 1367/cysteine 1376, cysteine 1393/cysteine 1401, cysteine 1395/cysteine 1408, cysteine 1410/cysteine 1419, cysteine 1432/cysteine 1444, cysteine 1438/cysteine 1451, and cysteine 1453/cysteine 1462.

Its subcellular location is the secreted. This Mus musculus (Mouse) protein is Multiple epidermal growth factor-like domains protein 6 (Megf6).